Consider the following 89-residue polypeptide: Small ribosomal subunit protein uS15 (89 aa).

This sequence belongs to the universal ribosomal protein uS15 family. In terms of assembly, part of the 30S ribosomal subunit. Forms a bridge to the 50S subunit in the 70S ribosome, contacting the 23S rRNA.

Its function is as follows. One of the primary rRNA binding proteins, it binds directly to 16S rRNA where it helps nucleate assembly of the platform of the 30S subunit by binding and bridging several RNA helices of the 16S rRNA. Forms an intersubunit bridge (bridge B4) with the 23S rRNA of the 50S subunit in the ribosome. This chain is Small ribosomal subunit protein uS15, found in Mycobacterium leprae (strain Br4923).